The chain runs to 103 residues: Secreted LysM effector Mgx1LysM (103 aa).

An N-terminal signal peptide occupies residues 1-18; it reads MKVTTIIAALLSVAVVDA. Cystine bridges form between Cys31-Cys89 and Cys62-Cys97. The region spanning 37 to 85 is the LysM domain; it reads IPYVVKKGDTLTHIAHDIYKRKVGICDLAYTNHIGYNPDLIYEDQTLLI. Residues Gly44, Thr48, Asp75, and Ile77 each contribute to the chitin site.

This sequence belongs to the secreted LysM effector family. Forms homodimers in a chitin-independent manner through interactions at the N-termini of Mgx1LysM monomers. Homodimers are further polymerized in a chitin-dependent manner.

Its subcellular location is the secreted. It localises to the cell wall. Secreted effector that enables the plant pathogenic fungus to manipulate host defenses for successful infection. Binds chitin and suppresses the chitin-induced reactive oxygen species (ROS) burst. Chitin-induced polymerization of homodimers forms a contiguous Mg1LysM highly oligomeric super-complexe that is anchored to the chitin in the fungal cell wall to prevent hydrolysis by host chitinases. The protein is Secreted LysM effector Mgx1LysM of Zymoseptoria tritici (strain CBS 115943 / IPO323) (Speckled leaf blotch fungus).